We begin with the raw amino-acid sequence, 354 residues long: Guanine nucleotide-binding protein G(o) subunit alpha (354 aa).

Residue glycine 2 is the site of N-myristoyl glycine attachment. Cysteine 3 carries S-palmitoyl cysteine lipidation. A G-alpha domain is found at lysine 32–tyrosine 354. Residues lysine 35–threonine 48 are G1 motif. GTP-binding residues include glutamate 43, lysine 46, serine 47, threonine 48, serine 152, leucine 176, arginine 177, threonine 178, and arginine 179. Serine 47 serves as a coordination point for Mg(2+). The tract at residues aspartate 174 to threonine 182 is G2 motif. Arginine 179 carries the ADP-ribosylarginine; by cholera toxin modification. Threonine 182 provides a ligand contact to Mg(2+). The segment at phenylalanine 197–arginine 206 is G3 motif. A 5-glutamyl histamine modification is found at glutamine 205. The tract at residues isoleucine 266–aspartate 273 is G4 motif. GTP contacts are provided by asparagine 270, aspartate 273, and cysteine 325. Residues threonine 324–threonine 329 are G5 motif. Residue cysteine 351 is the site of S-palmitoyl cysteine attachment. At cysteine 351 the chain carries ADP-ribosylcysteine; by pertussis toxin.

This sequence belongs to the G-alpha family. G(i/o/t/z) subfamily. As to quaternary structure, g proteins are composed of 3 units; alpha, beta and gamma. The alpha chain contains the guanine nucleotide binding site. Forms a complex with GNB1 and GNG3. Interacts with RGS14. Interacts with RGS16. Interacts with RGS19. Interacts (when palmitoylated) with ADGRG3. Histaminylated at Gln-205 residues by TGM2. In terms of processing, palmitoylated at Cys-351, leading to binding to ADGRG3.

The protein resides in the cell membrane. Its subcellular location is the membrane. It catalyses the reaction GTP + H2O = GDP + phosphate + H(+). With respect to regulation, the GTPase activity is promoted by GTPAse activators, such as RGS14, RGS16 and RGS19. In terms of biological role, guanine nucleotide-binding proteins (G proteins) function as transducers downstream of G protein-coupled receptors (GPCRs) in numerous signaling cascades. The alpha chain contains the guanine nucleotide binding site and alternates between an active, GTP-bound state and an inactive, GDP-bound state. Signaling by an activated GPCR promotes GDP release and GTP binding. The alpha subunit has a low GTPase activity that converts bound GTP to GDP, thereby terminating the signal. Both GDP release and GTP hydrolysis are modulated by numerous regulatory proteins. Signaling is mediated via effector proteins, such as adenylate cyclase. Inhibits adenylate cyclase activity, leading to decreased intracellular cAMP levels. The chain is Guanine nucleotide-binding protein G(o) subunit alpha (GNAO1) from Homo sapiens (Human).